A 198-amino-acid polypeptide reads, in one-letter code: Nicotinamidase 3 (198 aa).

This sequence belongs to the isochorismatase family.

It catalyses the reaction nicotinamide + H2O = nicotinate + NH4(+). It functions in the pathway cofactor biosynthesis; nicotinate biosynthesis; nicotinate from nicotinamide: step 1/1. In terms of biological role, catalyzes the deamidation of nicotinamide, an early step in the NAD(+) salvage pathway. Prevents the accumulation of intracellular nicotinamide, a known inhibitor of poly(ADP-ribose) polymerases (PARP enzymes). The protein is Nicotinamidase 3 of Arabidopsis thaliana (Mouse-ear cress).